Reading from the N-terminus, the 96-residue chain is Mitochondrial import inner membrane translocase subunit Tim13-B (96 aa).

The Twin CX3C motif signature appears at 47-70; sequence CFRKCIGKPGGSLDNSEQKCVAMC. 2 disulfide bridges follow: Cys-47/Cys-70 and Cys-51/Cys-66.

The protein belongs to the small Tim family. In terms of assembly, heterohexamer; composed of 3 copies of TIMM8 (TIMM8A or TIMM8B) and 3 copies of TIMM13, named soluble 70 kDa complex. Associates with the TIM22 complex, whose core is composed of TIMM22.

The protein localises to the mitochondrion inner membrane. Functionally, mitochondrial intermembrane chaperone that participates in the import and insertion of some multi-pass transmembrane proteins into the mitochondrial inner membrane. Also required for the transfer of beta-barrel precursors from the TOM complex to the sorting and assembly machinery (SAM complex) of the outer membrane. Acts as a chaperone-like protein that protects the hydrophobic precursors from aggregation and guide them through the mitochondrial intermembrane space. The TIMM8-TIMM13 complex mediates the import of some proteins while the predominant TIMM9-TIMM10 70 kDa complex mediates the import of much more proteins. This chain is Mitochondrial import inner membrane translocase subunit Tim13-B (timm13-b), found in Xenopus laevis (African clawed frog).